The following is a 314-amino-acid chain: WD repeat domain-containing protein 83 (314 aa).

WD repeat units follow at residues 23–62, 65–104, 107–146, 151–188, 189–228, 231–272, and 275–313; these read CNQGAVRAVRFNVDGNYCMTCGSDKTLKLWNPHKGTLLKT, GHGYEVLDTAGSYDNSQMCSCSSDKTVILWDVAQGQVVRK, GHAGKVNCVQFNEEATVIMSGSIDSSIRCWDCRSRRPEAI, EAKDGISSIKISDHEILAGSVDGNLRRYDLRKGEMCAD, YLGSPITCVSFSQDSQCLLASSLDSTLRLLDKDTGELLGE, GHQN…LVLK, and VGKAAVQSLSFHPSECCLLTASEGGVQLWRGASYEEEGG.

Belongs to the WD repeat MORG1 family.

It localises to the cytoplasm. Its function is as follows. Molecular scaffold protein for various multimeric protein complexes. Acts as a module in the assembly of a multicomponent scaffold for the ERK pathway, linking ERK responses to specific agonists. Also involved in response to hypoxia by acting as a negative regulator of HIF1A/HIF-1-alpha. In Xenopus tropicalis (Western clawed frog), this protein is WD repeat domain-containing protein 83 (wdr83).